The chain runs to 647 residues: uncharacterized protein (647 aa).

Helical transmembrane passes span 14–38 (LFPIFTFVLINLIILSLSRLGLAVW), 61–78 (VVALCYLFGVPALLTTLF), 90–110 (LWLTFGSVFIIFMEIATPAFI), 140–158 (LSAVIFSLVFTILAAVIYW), and 178–195 (VIALLVIVVSFLGARSSF).

The protein localises to the cell membrane. This is an uncharacterized protein from Haemophilus influenzae (strain ATCC 51907 / DSM 11121 / KW20 / Rd).